The following is a 50-amino-acid chain: Small ribosomal subunit protein uS14 (50 aa).

The Zn(2+) site is built by C15, C18, C33, and C36.

Belongs to the universal ribosomal protein uS14 family. Zinc-binding uS14 subfamily. Part of the 30S ribosomal subunit. The cofactor is Zn(2+).

Functionally, binds 16S rRNA, required for the assembly of 30S particles. The protein is Small ribosomal subunit protein uS14 of Methanosarcina mazei (strain ATCC BAA-159 / DSM 3647 / Goe1 / Go1 / JCM 11833 / OCM 88) (Methanosarcina frisia).